The primary structure comprises 249 residues: Cobalt transport protein CbiM (249 aa).

The signal sequence occupies residues 1–27 (MKPLHRWLPVVIGAALLIIFESRAAYA). Transmembrane regions (helical) follow at residues 33 to 53 (GFLPPVWAGFWFIVVLPFWVL), 70 to 90 (LLLGFAAAFAFVLSALKIPSV), 102 to 122 (LGTILFGPLVMSVLGSIVLLF), 134 to 154 (TLGANAFSMAVVGPFVAWLIW), 161 to 181 (APIWLTVFLAAALADLFTYVV), and 207 to 227 (IFAVTQIPLAISEGILTVLIF).

It belongs to the CbiM family. As to quaternary structure, forms an energy-coupling factor (ECF) transporter complex composed of an ATP-binding protein (A component, CbiO), a transmembrane protein (T component, CbiQ) and 2 possible substrate-capture proteins (S components, CbiM and CbiN) of unknown stoichimetry.

It localises to the cell membrane. The protein operates within cofactor biosynthesis; adenosylcobalamin biosynthesis. Functionally, part of the energy-coupling factor (ECF) transporter complex CbiMNOQ involved in cobalt import. In Roseiflexus sp. (strain RS-1), this protein is Cobalt transport protein CbiM.